Here is a 210-residue protein sequence, read N- to C-terminus: MEVLKTGTTTVGITAGDYVIMGTDSRATMENFISNKNAQKLYQIDNYAAMTIAGLVGDAQVLVRYMKAEMELYRVQRKVSMPIDAAATLLSNMLNQTKFYPYMVQLLVGGYDTKPHIFSIDAAGGSVEDIYASTGSGSPFVYGVLEAEYQKNMSLDDGINLVIKAISAAKQRDSASGNMLQLGVVDPKKGFYYLSEDEILSRLKKLKLQL.

The propeptide at 1–7 (MEVLKTG) is removed in mature form; by autocatalysis. Thr-8 serves as the catalytic Nucleophile.

This sequence belongs to the peptidase T1B family. As to quaternary structure, the 20S proteasome core is composed of 14 alpha and 14 beta subunits that assemble into four stacked heptameric rings, resulting in a barrel-shaped structure. The two inner rings, each composed of seven catalytic beta subunits, are sandwiched by two outer rings, each composed of seven alpha subunits. The catalytic chamber with the active sites is on the inside of the barrel. Has a gated structure, the ends of the cylinder being occluded by the N-termini of the alpha-subunits. Is capped at one or both ends by the proteasome regulatory ATPase, PAN.

The protein resides in the cytoplasm. The catalysed reaction is Cleavage of peptide bonds with very broad specificity.. The formation of the proteasomal ATPase PAN-20S proteasome complex, via the docking of the C-termini of PAN into the intersubunit pockets in the alpha-rings, triggers opening of the gate for substrate entry. Interconversion between the open-gate and close-gate conformations leads to a dynamic regulation of the 20S proteasome proteolysis activity. Its function is as follows. Component of the proteasome core, a large protease complex with broad specificity involved in protein degradation. This is Proteasome subunit beta from Picrophilus torridus (strain ATCC 700027 / DSM 9790 / JCM 10055 / NBRC 100828 / KAW 2/3).